Reading from the N-terminus, the 513-residue chain is V-type proton ATPase subunit B, kidney isoform (513 aa).

Residue R394 coordinates ATP. The PDZ-binding signature appears at 510–513 (DTAL).

It belongs to the ATPase alpha/beta chains family. In terms of assembly, V-ATPase is a heteromultimeric enzyme made up of two complexes: the ATP-hydrolytic V1 complex and the proton translocation V0 complex. The V1 complex consists of three catalytic AB heterodimers that form a heterohexamer, three peripheral stalks each consisting of EG heterodimers, one central rotor including subunits D and F, and the regulatory subunits C and H. The proton translocation complex V0 consists of the proton transport subunit a, a ring of proteolipid subunits c9c'', rotary subunit d, subunits e and f, and the accessory subunits ATP6AP1/Ac45 and ATP6AP2/PRR. Forms a complex with NHERF1 and SCL4A7. In terms of tissue distribution, kidney cortex and medulla.

The protein localises to the apical cell membrane. Its subcellular location is the basolateral cell membrane. Its function is as follows. Non-catalytic subunit of the V1 complex of vacuolar(H+)-ATPase (V-ATPase), a multisubunit enzyme composed of a peripheral complex (V1) that hydrolyzes ATP and a membrane integral complex (V0) that translocates protons. V-ATPase is responsible for acidifying and maintaining the pH of intracellular compartments and in some cell types, is targeted to the plasma membrane, where it is responsible for acidifying the extracellular environment. Essential for the proper assembly and activity of V-ATPase. In renal intercalated cells, mediates secretion of protons (H+) into the urine thereby ensuring correct urinary acidification. Required for optimal olfactory function by mediating the acidification of the nasal olfactory epithelium. The protein is V-type proton ATPase subunit B, kidney isoform (ATP6V1B1) of Bos taurus (Bovine).